Reading from the N-terminus, the 596-residue chain is Zinc finger E-box-binding homeobox protein zag-1 (596 aa).

The segment at 24–46 adopts a C2H2-type 1 zinc-finger fold; sequence FKCPECTKAFKFKHHLKEHIRIH. A C2H2-type 2; degenerate zinc finger spans residues 52 to 72; that stretch reads FECQQCHKRFSHSGSYSSHMS. Over residues 133-145 the composition is skewed to polar residues; sequence LENGTSPTPTQEP. Disordered regions lie at residues 133 to 225, 324 to 369, and 395 to 421; these read LENG…RPLR, NNSL…EPEW, and GFVTNQEDEEEKPIKAEESPVSSGSSS. Residues 165–179 are compositionally biased toward basic and acidic residues; that stretch reads SEVKTEVKTEVKTED. Residues 188–200 show a composition bias toward polar residues; sequence PAVSMSLSPAPEQ. Over residues 201–216 the composition is skewed to low complexity; it reads NGNESMNNGGSGSDGK. Residues 223-282 constitute a DNA-binding region (homeobox); the sequence is PLRSRSFLNDSQVAVLQNHFKRNPFPSKYELSAVAEQIGVNKRVVQVWFQNTRAKERRSN. Positions 331 to 355 are enriched in basic and acidic residues; that stretch reads QDERNNENTDEVMDHDGLKDGKETP. 2 C2H2-type zinc fingers span residues 481 to 503 and 509 to 531; these read FSCDQCDKVFGKQSSLARHKYEH and YKCDICEKAFKHKHHLTEHKRLH. Residues 537-560 form a C2H2-type 5; degenerate zinc finger; sequence FQCDKCLKRFSHSGSYSQHMNHRY. A disordered region spans residues 569–596; it reads QPASPSDVLNGGSVTVSPSSSNTPPPST. Low complexity predominate over residues 578–590; sequence NGGSVTVSPSSSN.

In terms of tissue distribution, expressed in the six touch receptor neurons (TRNs) but not in the FLP and PVD neurons. Expressed in the M4 cholinergic motor neuron.

The protein localises to the nucleus. Its function is as follows. Transcription factor. Down-regulates expression of genes involved in either the synthesis or reuptake of serotonin, dopamine and GABA. Acts as a transcriptional repressor to regulate multiple, discrete, neuron-specific aspects of terminal differentiation, including cell migration, axonal development and gene expression. Promotes touch receptor neuron differentiation by repressing the expression of egl-44 and egl-46. As egl-44 and egl-46, probably acting as a heterodimer, repress expression of zag-1 in FLP neurons, together these proteins form a bistable, negative-feedback loop that regulates the choice between neuronal fates. Required for axon guidance. Involved in the proper development of the pharynx. Required for pharynx isthmus peristalsis, probably via a role in the differentiation of the M4 cholinergic motor neuron. Directly represses its own transcription by interacting with conserved E-box sequence motifs 5'-CACCTG-3' in its own promoter. May also act as a transcriptional activator of the homeodomain ceh-28. In Caenorhabditis elegans, this protein is Zinc finger E-box-binding homeobox protein zag-1.